The primary structure comprises 484 residues: FAD-dependent monooxygenase aurC (484 aa).

The signal sequence occupies residues 1–21 (MGAYSFRVIIVGGSITGMTLA). The FAD site is built by E35, G49, and R108. The active site involves Y216. Positions 308 and 321 each coordinate FAD. The chain crosses the membrane as a helical span at residues 451 to 471 (FAVASLIVLIVVLARALDSPA).

The protein belongs to the paxM FAD-dependent monooxygenase family. FAD is required as a cofactor.

It is found in the membrane. Its pathway is polyketide biosynthesis. FAD-dependent monooxygenase; part of the gene cluster that mediates the biosynthesis of aurovertins, fungal polyketides that exhibit potent inhibition of adenosine triphosphate synthase. Tha biosynthesis starts with the HR-PKS aurA that selects propionate as the starter unit; synthesizes a hexa-ene chain through the repeated functions of the KR and DH domains in the first six iterations; selectively introduces three alpha-methyl substitutions at C4, C6, and C16 using the S-adensylmethionine-dependent cMET; and shuts off KR and DH in the last three iterations to afford a 1,3,5-triketo portion that can undergo intramolecular cyclization to yield the alpha-pyrone intermediate. AurE may act as a cyclase and enhances the rate of pyrone formation and product release of aurA. The methyltransferase aurB then methylates the C17 hydroxyl group. C17 methylation is required to initiate epoxidation by the downstream monooxygenase aurC. The monooxygenase aurC and the epoxide hydrolase aurD can iteratively transform the terminal triene portion of the methylated precursor into the dioxabicyclo[3.2.1]octane scaffold of aurovertin E. Epoxidation modifications of the precursor occur in two separate steps; bis-epoxidation of the two terminal olefins takes place first, followed by another epoxidation that occurs at C7-C8 after tetrahydrofuran formation. The O-acyltransferase aurG converts aurovertin E to aurovertin A. In Calcarisporium arbuscula (Dendryphion arbuscula), this protein is FAD-dependent monooxygenase aurC.